A 213-amino-acid chain; its full sequence is MAKNLSIIDRAIVGFDSSLRAIIPHSNQTARPLPVSSDALPQLSITESRHVAGLMRINHTGEVCAQGLYHGQAFTAKDDLVKQAMQHSADEEIDHLVWCETRLDELGSHPSVFTPVWYGLSFGLGAIAGIISDEFSLGFVAETEAQVSEHLQDHIDQLPEQDTRSKEILAQMNIEELEHREAALNHGGKALSAPVRISMRWMANRMKNLAYHL.

The Fe cation site is built by Glu-62, Glu-92, His-95, Glu-144, Glu-176, and His-179.

It belongs to the COQ7 family. The cofactor is Fe cation.

Its subcellular location is the cell membrane. It catalyses the reaction a 5-methoxy-2-methyl-3-(all-trans-polyprenyl)benzene-1,4-diol + AH2 + O2 = a 3-demethylubiquinol + A + H2O. The protein operates within cofactor biosynthesis; ubiquinone biosynthesis. In terms of biological role, catalyzes the hydroxylation of 2-nonaprenyl-3-methyl-6-methoxy-1,4-benzoquinol during ubiquinone biosynthesis. The sequence is that of 3-demethoxyubiquinol 3-hydroxylase from Psychrobacter sp. (strain PRwf-1).